We begin with the raw amino-acid sequence, 1246 residues long: HMG2-induced ER-remodeling protein 1 (1246 aa).

Disordered stretches follow at residues 19–241, 263–288, and 816–836; these read KGKR…GSLT, HHIQ…LPPI, and MPDA…KDEK. The segment covering 27–41 has biased composition (low complexity); sequence KSAASTRTSEATTTS. Polar residues predominate over residues 58–95; that stretch reads TIASPQRPLSGQNVNNELSNSKPAVSAEKVSQQGQVPT. Position 102 is a phosphoserine (Ser102). At Thr128 the chain carries Phosphothreonine. 2 stretches are compositionally biased toward low complexity: residues 154 to 163 and 211 to 230; these read RSSSISTSLN and SKIS…PSSS. The segment covering 271–282 has biased composition (basic and acidic residues); that stretch reads SGREQDSPHSES. Ser277 is subject to Phosphoserine. Position 1013 is a phosphoserine (Ser1013). Composition is skewed to polar residues over residues 1109 to 1133 and 1200 to 1215; these read SSRH…TPDS and SRSP…QQKA. Disordered regions lie at residues 1109–1157 and 1192–1224; these read SSRH…LPKI and SLYG…LVED. Thr1130 carries the phosphothreonine modification. Phosphoserine occurs at positions 1200, 1204, and 1207.

This sequence belongs to the GIP3/HER1 family. As to quaternary structure, may interact with ribosomes.

Its subcellular location is the cytoplasm. Functionally, required for HMG2-induced endoplasmic reticulum-remodeling. The polypeptide is HMG2-induced ER-remodeling protein 1 (HER1) (Saccharomyces cerevisiae (strain ATCC 204508 / S288c) (Baker's yeast)).